The sequence spans 239 residues: Eukaryotic translation initiation factor 6 (239 aa).

The protein belongs to the eIF-6 family. In terms of assembly, monomer. Associates with the 60S ribosomal subunit.

It is found in the cytoplasm. The protein resides in the nucleus. The protein localises to the nucleolus. Its function is as follows. Binds to the 60S ribosomal subunit and prevents its association with the 40S ribosomal subunit to form the 80S initiation complex in the cytoplasm. May also be involved in ribosome biogenesis. The sequence is that of Eukaryotic translation initiation factor 6 from Entamoeba dispar (strain ATCC PRA-260 / SAW760).